The sequence spans 70 residues: DNA-directed RNA polymerase subunit omega (70 aa).

The protein belongs to the RNA polymerase subunit omega family. In terms of assembly, the RNAP catalytic core consists of 2 alpha, 1 beta, 1 beta' and 1 omega subunit. When a sigma factor is associated with the core the holoenzyme is formed, which can initiate transcription.

It catalyses the reaction RNA(n) + a ribonucleoside 5'-triphosphate = RNA(n+1) + diphosphate. Its function is as follows. Promotes RNA polymerase assembly. Latches the N- and C-terminal regions of the beta' subunit thereby facilitating its interaction with the beta and alpha subunits. In Staphylococcus epidermidis (strain ATCC 35984 / DSM 28319 / BCRC 17069 / CCUG 31568 / BM 3577 / RP62A), this protein is DNA-directed RNA polymerase subunit omega.